Here is a 206-residue protein sequence, read N- to C-terminus: GTP cyclohydrolase 1 (206 aa).

Zn(2+)-binding residues include C97, H100, and C168.

Belongs to the GTP cyclohydrolase I family. As to quaternary structure, toroid-shaped homodecamer, composed of two pentamers of five dimers.

The catalysed reaction is GTP + H2O = 7,8-dihydroneopterin 3'-triphosphate + formate + H(+). It functions in the pathway cofactor biosynthesis; 7,8-dihydroneopterin triphosphate biosynthesis; 7,8-dihydroneopterin triphosphate from GTP: step 1/1. The protein is GTP cyclohydrolase 1 of Chromobacterium violaceum (strain ATCC 12472 / DSM 30191 / JCM 1249 / CCUG 213 / NBRC 12614 / NCIMB 9131 / NCTC 9757 / MK).